A 171-amino-acid chain; its full sequence is MLP-like protein 31 (171 aa).

This sequence belongs to the MLP family.

The chain is MLP-like protein 31 (MLP31) from Arabidopsis thaliana (Mouse-ear cress).